We begin with the raw amino-acid sequence, 271 residues long: MKYSMITLGAFAMMAVAQLSSLPACGQTCISNMLALAPTFGCTANDASCLCSDVNFAYGIRDCSNAACGAEAAGPVIAYGVEYCSSAGVGLSGSATGIDPGLGPATAVVASTPIATDGASAGSLSAITTSEFTSYVISGDSTVSTIVGSTTIYGPAAGSSSAITTSPIVSTVTSGDTSYPTTVGSTTIFGVAGVISTPTASASSALDSLSSSIASEASVITSSASAAVSSLSSRLSSAASPVSTTTSSAGGARQTAFAGLAAAAGFAAIIL.

Residues methionine 1–alanine 17 form the signal peptide. In terms of domain architecture, CFEM spans glutamine 18–serine 111. 4 disulfide bridges follow: cysteine 25/cysteine 68, cysteine 29/cysteine 63, cysteine 42/cysteine 49, and cysteine 51/cysteine 84. A heme-binding site is contributed by aspartate 46. Serine 247 carries GPI-anchor amidated serine lipidation. Positions serine 248–leucine 271 are cleaved as a propeptide — removed in mature form.

This sequence belongs to the RBT5 family.

It localises to the cell membrane. The protein resides in the secreted. The protein localises to the host nucleus. It is found in the host cell membrane. Its subcellular location is the host chloroplast envelope. Its function is as follows. Appears to function during host infection, and may play a role in suppressing the host immune response. The sequence is that of Effector CFEM6 from Marssonina brunnea f. sp. multigermtubi (strain MB_m1) (Marssonina leaf spot fungus).